Here is a 390-residue protein sequence, read N- to C-terminus: S-adenosylmethionine synthase 4 (390 aa).

Glutamate 9 provides a ligand contact to Mg(2+). Histidine 15 is a binding site for ATP. Glutamate 43 serves as a coordination point for K(+). L-methionine is bound by residues glutamate 56 and glutamine 99. Residues 167–169 (DGK), 235–238 (SGRF), aspartate 246, 252–253 (RK), alanine 269, lysine 273, and lysine 277 contribute to the ATP site. Aspartate 246 is an L-methionine binding site. Lysine 277 serves as a coordination point for L-methionine.

Belongs to the AdoMet synthase family. In terms of assembly, homotetramer. It depends on Mn(2+) as a cofactor. The cofactor is Mg(2+). Co(2+) serves as cofactor. K(+) is required as a cofactor.

The protein resides in the cytoplasm. It catalyses the reaction L-methionine + ATP + H2O = S-adenosyl-L-methionine + phosphate + diphosphate. Its pathway is amino-acid biosynthesis; S-adenosyl-L-methionine biosynthesis; S-adenosyl-L-methionine from L-methionine: step 1/1. In terms of biological role, catalyzes the formation of S-adenosylmethionine from methionine and ATP. The reaction comprises two steps that are both catalyzed by the same enzyme: formation of S-adenosylmethionine (AdoMet) and triphosphate, and subsequent hydrolysis of the triphosphate. The sequence is that of S-adenosylmethionine synthase 4 (METK4) from Populus trichocarpa (Western balsam poplar).